A 670-amino-acid polypeptide reads, in one-letter code: Probable Na(+)/H(+) antiporter nhx-3 (670 aa).

The next 8 helical transmembrane spans lie at 41 to 61, 73 to 93, 97 to 117, 129 to 149, 164 to 184, 192 to 212, 235 to 255, and 268 to 288; these read VYVI…FNLM, LLII…LSGV, SHAF…YFMP, LVFS…SLLI, EILV…IAIF, FLFI…VVLY, GLSF…FAIA, and ILAP…AEMV. N-linked (GlcNAc...) asparagine glycosylation occurs at Asn310. Helical transmembrane passes span 325 to 345, 351 to 371, 390 to 410, and 418 to 438; these read MLAQ…TLTS, FIFI…GIIV, FILS…VSIP, and MFIT…GITI. A disordered region spans residues 648–670; the sequence is GDLKGHCGTSRKPKHSMFELRHV.

The protein belongs to the monovalent cation:proton antiporter 1 (CPA1) transporter (TC 2.A.36) family. In terms of processing, phosphorylated. Expressed in hypodermal cells of the main body syncytium, ut1 cells of the vulva and the spermathecal junction cell.

The protein resides in the endomembrane system. Functionally, plays a role in epithelial membrane transport processes. The chain is Probable Na(+)/H(+) antiporter nhx-3 (nhx-3) from Caenorhabditis elegans.